The following is a 921-amino-acid chain: Eukaryotic translation initiation factor 3 subunit A (921 aa).

The PCI domain occupies 319–493; it reads FKFYASQLVL…GVVSFMEDPF (175 aa). The disordered stretch occupies residues 497 to 524; it reads GGSTATNADDEQRNDDGYEETHVEEEPE. The span at 506-517 shows a compositional bias: basic and acidic residues; it reads DEQRNDDGYEET. Coiled coils occupy residues 562 to 647 and 693 to 868; these read ARNE…NEKT and ERMS…IKRN. The span at 818–865 shows a compositional bias: basic and acidic residues; it reads AAKEHDDRQRMLQDRLTKERKERERVNKEKDEAARKQREIEEAVERTI. The disordered stretch occupies residues 818–921; sequence AAKEHDDRQR…KMKLRRAGRA (104 aa). A compositionally biased stretch (pro residues) spans 873–890; it reads PAPPVRSAPPARAAPPPR. Positions 903–913 are enriched in basic and acidic residues; sequence PEKKLTYAEKM.

The protein belongs to the eIF-3 subunit A family. As to quaternary structure, component of the eukaryotic translation initiation factor 3 (eIF-3) complex.

It is found in the cytoplasm. Its function is as follows. RNA-binding component of the eukaryotic translation initiation factor 3 (eIF-3) complex, which is involved in protein synthesis of a specialized repertoire of mRNAs and, together with other initiation factors, stimulates binding of mRNA and methionyl-tRNAi to the 40S ribosome. The eIF-3 complex specifically targets and initiates translation of a subset of mRNAs involved in cell proliferation. The protein is Eukaryotic translation initiation factor 3 subunit A of Eremothecium gossypii (strain ATCC 10895 / CBS 109.51 / FGSC 9923 / NRRL Y-1056) (Yeast).